The primary structure comprises 449 residues: AP-4 complex subunit mu-1 (449 aa).

An MHD domain is found at 184–448 (KNEVFLDVVE…LSHSNAYVIR (265 aa)).

Belongs to the adaptor complexes medium subunit family. Adaptor protein complex 4 (AP-4) is a heterotetramer composed of two large adaptins (epsilon-type subunit AP4E1 and beta-type subunit AP4B1), a medium adaptin (mu-type subunit AP4M1) and a small adaptin (sigma-type AP4S1). Interacts with tyrosine-based sorting signals on the cytoplasmic tail of cargo proteins such as APP, ATG9A, LAMP2 and NAGPA. Interacts with the C-terminal domain of GRID2. Interacts with GRIA1 and GRIA2; the interaction is indirect via CACNG3. Interacts with CACNG3; CACNG3 associates GRIA1 and GRIA2 with the adaptor protein complex 4 (AP-4) to target them to the somatodendritic compartment of neurons. Interacts with HOOK1 and HOOK2; the interactions are direct, mediate the interaction between FTS-Hook-FHIP (FHF) complex and AP-4 and the perinuclear distribution of AP-4.

It localises to the golgi apparatus. The protein localises to the trans-Golgi network membrane. It is found in the early endosome. In terms of biological role, component of the adaptor protein complex 4 (AP-4). Adaptor protein complexes are vesicle coat components involved both in vesicle formation and cargo selection. They control the vesicular transport of proteins in different trafficking pathways. AP-4 forms a non clathrin-associated coat on vesicles departing the trans-Golgi network (TGN) and may be involved in the targeting of proteins from the trans-Golgi network (TGN) to the endosomal-lysosomal system. It is also involved in protein sorting to the basolateral membrane in epithelial cells and the proper asymmetric localization of somatodendritic proteins in neurons. Within AP-4, the mu-type subunit AP4M1 is directly involved in the recognition and binding of tyrosine-based sorting signals found in the cytoplasmic part of cargos. The adaptor protein complex 4 (AP-4) may also recognize other types of sorting signal. The chain is AP-4 complex subunit mu-1 from Mus musculus (Mouse).